The sequence spans 100 residues: Small ribosomal subunit protein bS18c (100 aa).

This sequence belongs to the bacterial ribosomal protein bS18 family. Part of the 30S ribosomal subunit.

Its subcellular location is the plastid. It localises to the chloroplast. The sequence is that of Small ribosomal subunit protein bS18c from Pleurastrum terricola (Filamentous green alga).